Reading from the N-terminus, the 645-residue chain is uncharacterized protein (645 aa).

Belongs to the mycobacterial PPE family.

This is an uncharacterized protein from Mycobacterium tuberculosis (strain CDC 1551 / Oshkosh).